The sequence spans 449 residues: Ribulose bisphosphate carboxylase large chain (449 aa).

At lysine 5 the chain carries N6,N6,N6-trimethyllysine. Substrate contacts are provided by asparagine 114 and threonine 164. Lysine 166 functions as the Proton acceptor in the catalytic mechanism. Lysine 168 is a substrate binding site. Mg(2+)-binding residues include lysine 192, aspartate 194, and glutamate 195. Residue lysine 192 is modified to N6-carboxylysine. The Proton acceptor role is filled by histidine 285. The substrate site is built by arginine 286, histidine 318, and serine 370.

The protein belongs to the RuBisCO large chain family. Type I subfamily. As to quaternary structure, heterohexadecamer of 8 large chains and 8 small chains; disulfide-linked. The disulfide link is formed within the large subunit homodimers. Mg(2+) is required as a cofactor. Post-translationally, the disulfide bond which can form in the large chain dimeric partners within the hexadecamer appears to be associated with oxidative stress and protein turnover.

It is found in the plastid. The protein resides in the chloroplast. The enzyme catalyses 2 (2R)-3-phosphoglycerate + 2 H(+) = D-ribulose 1,5-bisphosphate + CO2 + H2O. The catalysed reaction is D-ribulose 1,5-bisphosphate + O2 = 2-phosphoglycolate + (2R)-3-phosphoglycerate + 2 H(+). RuBisCO catalyzes two reactions: the carboxylation of D-ribulose 1,5-bisphosphate, the primary event in carbon dioxide fixation, as well as the oxidative fragmentation of the pentose substrate in the photorespiration process. Both reactions occur simultaneously and in competition at the same active site. The protein is Ribulose bisphosphate carboxylase large chain of Zamioculcas zamiifolia (Aroid palm).